Reading from the N-terminus, the 216-residue chain is UPF0502 protein VC0395_0676/VC395_A0574 (216 aa).

Belongs to the UPF0502 family.

The chain is UPF0502 protein VC0395_0676/VC395_A0574 from Vibrio cholerae serotype O1 (strain ATCC 39541 / Classical Ogawa 395 / O395).